The primary structure comprises 154 residues: Protein disulfide-isomerase LQY1, chloroplastic (154 aa).

The N-terminal 43 residues, 1–43 (MPVSAPSPPRLHSPFIHCPINFTPSSFSARNLRSPSTSYPRIK), are a transit peptide targeting the chloroplast. A helical transmembrane segment spans residues 51–71 (VVAISVGVASVALGIGIPVFY). The CR-type zinc finger occupies 77–147 (NAAKRENTQP…SGVQPRYLDR (71 aa)). Zn(2+)-binding residues include Cys87, Cys90, Cys98, Cys101, Cys121, Cys124, Cys132, and Cys135.

It belongs to the BSD2 chaperone family. As to quaternary structure, interacts with the photosystem II core subunits. Interacts with HHL1. It depends on Zn(2+) as a cofactor.

The protein localises to the plastid. The protein resides in the chloroplast thylakoid membrane. The catalysed reaction is Catalyzes the rearrangement of -S-S- bonds in proteins.. Its function is as follows. Protein disulfide-isomerase probably involved upon formation of a complex with HHL1 in maintaining photosystem II (PSII) activity under high light by regulating repair and reassembly of PSII complexes. This Arabidopsis thaliana (Mouse-ear cress) protein is Protein disulfide-isomerase LQY1, chloroplastic.